A 240-amino-acid chain; its full sequence is Large ribosomal subunit protein uL2 (240 aa).

Residues 1–11 (MGKRLISQNRG) are compositionally biased toward polar residues. 2 disordered regions span residues 1–28 (MGKR…KGAV) and 206–240 (GGGR…TGRK). 2 stretches are compositionally biased toward basic residues: residues 13-28 (GTPK…KGAV) and 224-240 (SPGR…TGRK).

The protein belongs to the universal ribosomal protein uL2 family. As to quaternary structure, part of the 50S ribosomal subunit. Forms a bridge to the 30S subunit in the 70S ribosome.

In terms of biological role, one of the primary rRNA binding proteins. Required for association of the 30S and 50S subunits to form the 70S ribosome, for tRNA binding and peptide bond formation. It has been suggested to have peptidyltransferase activity; this is somewhat controversial. Makes several contacts with the 16S rRNA in the 70S ribosome. This is Large ribosomal subunit protein uL2 from Methanococcus maripaludis (strain C7 / ATCC BAA-1331).